Reading from the N-terminus, the 127-residue chain is Large ribosomal subunit protein bL17 (127 aa).

The protein belongs to the bacterial ribosomal protein bL17 family. Part of the 50S ribosomal subunit. Contacts protein L32.

The chain is Large ribosomal subunit protein bL17 from Aeromonas hydrophila subsp. hydrophila (strain ATCC 7966 / DSM 30187 / BCRC 13018 / CCUG 14551 / JCM 1027 / KCTC 2358 / NCIMB 9240 / NCTC 8049).